Consider the following 644-residue polypeptide: Exoribonuclease 2 (644 aa).

An RNB domain is found at 189–516 (RRDLTALDFV…NHRLLKAIIK (328 aa)). Residues 561 to 643 (DTRFAAEILD…ETRSIIARPA (83 aa)) form the S1 motif domain.

It belongs to the RNR ribonuclease family. RNase II subfamily.

The protein localises to the cytoplasm. It catalyses the reaction Exonucleolytic cleavage in the 3'- to 5'-direction to yield nucleoside 5'-phosphates.. Involved in mRNA degradation. Hydrolyzes single-stranded polyribonucleotides processively in the 3' to 5' direction. This is Exoribonuclease 2 from Klebsiella pneumoniae (strain 342).